The following is a 724-amino-acid chain: NAD(+) hydrolase SARM1 (724 aa).

Residues 1-27 (MVLTLLFSAYKLCRFFTMSGPRPGADR) constitute a mitochondrion transit peptide. Positions 24–56 (GADRLTVPGPDRSGGASPWWAAGGRGSREVSPG) are disordered. The span at 36–45 (SGGASPWWAA) shows a compositional bias: low complexity. Residues 60 to 100 (EVQGALERSLPELQQALSELKQASAARAVGAGLAEVFQLVE) form an ARM 1 repeat. Residues W103, R110, 149–157 (EQILVAENR), and 190–193 (HMFK) contribute to the NAD(+) site. 7 ARM repeats span residues 114–153 (QGLC…QILV), 155–193 (ENRD…HMFK), 196–235 (EETC…NCAL), 237–280 (GGQT…LATN), 281–314 (KEVE…CLVD), 315–354 (ASDT…AEAA), and 359–402 (QGKT…EEVP). 2 SAM domains span residues 412–476 (WKEA…LKTF) and 486–548 (NLAD…MLHS). A phosphoserine mark is found at S548 and S558. Residues 560 to 703 (DTPDVFISYR…KIIRFLQGRP (144 aa)) enclose the TIR domain. NAD(+) is bound by residues 569–570 (RR) and E599. Residue E642 is part of the active site. The segment covering 703–716 (PSQDSSAGSDTSLE) has biased composition (polar residues). The disordered stretch occupies residues 703–724 (PSQDSSAGSDTSLEGATPMGLP).

The protein belongs to the SARM1 family. In terms of assembly, homooctamer; forms an octameric ring via SAM domains. Interacts with TICAM1/TRIF and thereby interferes with TICAM1/TRIF function. Interacts with SDC2 (via cytoplasmic domain) and MAPK10/JNK3. Post-translationally, phosphorylation at Ser-548 by JNK kinases (MAPK8, MAPK9 and /or MAPK10) enhance the NAD(+) hydrolase (NADase) activity. Phosphorylation at Ser-548 and subsequent activation takes place in response to oxidative stress conditions and inhibits mitochondrial respiration. As to expression, widely expressed in the brain and neurons (at protein level). Expressed in photoreceptor cells of the neural retina.

The protein localises to the cytoplasm. Its subcellular location is the cell projection. The protein resides in the axon. It is found in the dendrite. It localises to the synapse. The protein localises to the mitochondrion. It catalyses the reaction NAD(+) + H2O = ADP-D-ribose + nicotinamide + H(+). The catalysed reaction is NAD(+) = cyclic ADP-beta-D-ribose + nicotinamide + H(+). It carries out the reaction NADP(+) + H2O = ADP-D-ribose 2'-phosphate + nicotinamide + H(+). Its activity is regulated as follows. Autoinhibited: in the inactive state, the enzymatic TIR domain is held apart by the autoinhibiting ARM repeats. NAD(+)-binding to ARM repeats maintains an inactive state by promoting interaction between ARM repeats and the TIR domain, thereby facilitating inhibition of the enzymatic TIR domain. Following activation, possibly by nicotinamide mononucleotide (NMN), auto-inhibitory interactions are released, allowing self-association of the TIR domains and subsequent activation of the NAD(+) hydrolase (NADase) activity. Self-association of TIR domains is facilitated by the octamer of SAM domains. In terms of biological role, NAD(+) hydrolase, which plays a key role in axonal degeneration following injury by regulating NAD(+) metabolism. Acts as a negative regulator of MYD88- and TRIF-dependent toll-like receptor signaling pathway by promoting Wallerian degeneration, an injury-induced form of programmed subcellular death which involves degeneration of an axon distal to the injury site. Wallerian degeneration is triggered by NAD(+) depletion: in response to injury, SARM1 is activated and catalyzes cleavage of NAD(+) into ADP-D-ribose (ADPR), cyclic ADPR (cADPR) and nicotinamide; NAD(+) cleavage promoting cytoskeletal degradation and axon destruction. Also able to hydrolyze NADP(+), but not other NAD(+)-related molecules. Can activate neuronal cell death in response to stress. Regulates dendritic arborization through the MAPK4-JNK pathway. Involved in innate immune response: inhibits both TICAM1/TRIF- and MYD88-dependent activation of JUN/AP-1, TRIF-dependent activation of NF-kappa-B and IRF3, and the phosphorylation of MAPK14/p38. This chain is NAD(+) hydrolase SARM1, found in Mus musculus (Mouse).